The chain runs to 432 residues: Adenosylhomocysteinase (432 aa).

Residue Ser-2 is modified to N-acetylserine. Substrate-binding residues include Thr-57, Asp-131, and Glu-156. Ser-183 carries the post-translational modification Phosphoserine. An NAD binding region spans residues 183 to 350 (SVTKSKFDNL…EGRLVNLGCA (168 aa)). Substrate is bound by residues Lys-186 and Asp-190. An N6-(2-hydroxyisobutyryl)lysine modification is found at Lys-186. Tyr-193 bears the Phosphotyrosine mark.

Belongs to the adenosylhomocysteinase family. Homotetramer. Interaction with AHCYL1. The cofactor is NAD(+).

It localises to the cytoplasm. It is found in the melanosome. The protein localises to the nucleus. The protein resides in the endoplasmic reticulum. It carries out the reaction S-adenosyl-L-homocysteine + H2O = L-homocysteine + adenosine. It participates in amino-acid biosynthesis; L-homocysteine biosynthesis; L-homocysteine from S-adenosyl-L-homocysteine: step 1/1. In terms of biological role, catalyzes the hydrolysis of S-adenosyl-L-homocysteine to form adenosine and homocysteine. Binds copper ions. The polypeptide is Adenosylhomocysteinase (AHCY) (Bos taurus (Bovine)).